The primary structure comprises 143 residues: MLMRTDPFREFDRITRELTAPGTWSRPTAMPMDACREGDTYVVSFDLPGVDPEAIEIDIERNMLTVKAERGPAGNAEHVRMEVAERPLGVFSRQLVLADTLDTEQVRADYDAGVLTLRIPIAERAKRRRVKVGQGESHRQITG.

A sHSP domain is found at 23-135 (TWSRPTAMPM…KRRRVKVGQG (113 aa)).

This sequence belongs to the small heat shock protein (HSP20) family.

This chain is 18 kDa heat shock protein (hsp18), found in Streptomyces albus G.